The chain runs to 113 residues: MAGFGLPNFGQLTEAFRKAQQIQQDAQALQEELDGMEIEGKNSDGRASVWLSGNQQPLRVRLDPALVQDGAEACETATLEALQAAYEQSTATMKGRMEELTGGLNLNLPGMGG.

It belongs to the YbaB/EbfC family. As to quaternary structure, homodimer.

The protein resides in the cytoplasm. The protein localises to the nucleoid. Its function is as follows. Binds to DNA and alters its conformation. May be involved in regulation of gene expression, nucleoid organization and DNA protection. The protein is Nucleoid-associated protein Syncc9902_0023 of Synechococcus sp. (strain CC9902).